A 913-amino-acid polypeptide reads, in one-letter code: Clumping factor B (913 aa).

Positions 1–44 (MKKRIDYLSNKQNKYSIRRFTVGTTSVIVGATILFGIGNHQAQA) are cleaved as a signal peptide. Positions 15 to 26 (YSIRRFTVGTTS) match the YSIRK-G/S signaling motif motif. Composition is skewed to polar residues over residues 44-61 (ASEQSNDTTQSSKNNASA) and 68-95 (MIETPQLNTTANDTSDISANTNSANVDS). Residues 44–192 (ASEQSNDTTQ…QGTSKPSVRT (149 aa)) form a disordered region. The tract at residues 45-542 (SEQSNDTTQS…GSADGDSAVN (498 aa)) is ligand binding A region. Over residues 96–119 (TTKPMSTQTSNTTTTEPASTNETP) the composition is skewed to low complexity. The span at 120–189 (QPTAIKNQAT…SNAQGTSKPS (70 aa)) shows a compositional bias: polar residues. The MIDAS-like motif signature appears at 272 to 276 (DYSNS). The disordered stretch occupies residues 530–885 (YGGGSADGDS…ETGDKSENTN (356 aa)). Positions 545 to 555 (DPTPGPPVDPE) are enriched in pro residues. The segment covering 556–837 (PSPDPEPEPT…SDSDSDSDSD (282 aa)) has biased composition (acidic residues). Polar residues predominate over residues 841-852 (RVTPPNNEQKAP). Residues 869-882 (HKTDALPETGDKSE) show a composition bias toward basic and acidic residues. The LPXTG sorting signal signature appears at 874–878 (LPETG). Thr877 carries the post-translational modification Pentaglycyl murein peptidoglycan amidated threonine. The propeptide at 878-913 (GDKSENTNATLFGAMMALLGSLLLFRKRKQDHKEKA) is removed by sortase.

This sequence belongs to the serine-aspartate repeat-containing protein (SDr) family. In terms of processing, proteolytically cleaved by aureolysin (aur). This cleavage leads to the inactivation of ClfB.

It is found in the secreted. The protein localises to the cell wall. Cell surface-associated protein implicated in virulence by promoting bacterial attachment to both alpha- and beta-chains of human fibrinogen and inducing the formation of bacterial clumps. The sequence is that of Clumping factor B (clfB) from Staphylococcus aureus (strain COL).